The following is a 518-amino-acid chain: Probable bifunctional methylthioribulose-1-phosphate dehydratase/enolase-phosphatase E1 (518 aa).

The tract at residues 1–242 (MACCGGGRGE…AIKLYQLGID (242 aa)) is methylthioribulose-1-phosphate dehydratase. Cysteine 114 is a binding site for substrate. Residues histidine 132 and histidine 134 each coordinate Zn(2+). Glutamate 157 functions as the Proton donor/acceptor; for methylthioribulose-1-phosphate dehydratase activity in the catalytic mechanism. Position 207 (histidine 207) interacts with Zn(2+). The interval 279 to 518 (VVLDIEGTTT…FRTIKSFSEI (240 aa)) is enolase-phosphatase E1. Aspartate 282 and glutamate 284 together coordinate Mg(2+). Substrate contacts are provided by residues 417-418 (SS) and lysine 451. Position 477 (aspartate 477) interacts with Mg(2+).

It in the N-terminal section; belongs to the aldolase class II family. MtnB subfamily. The protein in the C-terminal section; belongs to the HAD-like hydrolase superfamily. MasA/MtnC family. Zn(2+) is required as a cofactor. Mg(2+) serves as cofactor.

It carries out the reaction 5-(methylsulfanyl)-D-ribulose 1-phosphate = 5-methylsulfanyl-2,3-dioxopentyl phosphate + H2O. The enzyme catalyses 5-methylsulfanyl-2,3-dioxopentyl phosphate + H2O = 1,2-dihydroxy-5-(methylsulfanyl)pent-1-en-3-one + phosphate. Its pathway is amino-acid biosynthesis; L-methionine biosynthesis via salvage pathway; L-methionine from S-methyl-5-thio-alpha-D-ribose 1-phosphate: step 2/6. It participates in amino-acid biosynthesis; L-methionine biosynthesis via salvage pathway; L-methionine from S-methyl-5-thio-alpha-D-ribose 1-phosphate: step 3/6. The protein operates within amino-acid biosynthesis; L-methionine biosynthesis via salvage pathway; L-methionine from S-methyl-5-thio-alpha-D-ribose 1-phosphate: step 4/6. The sequence is that of Probable bifunctional methylthioribulose-1-phosphate dehydratase/enolase-phosphatase E1 from Oryza sativa subsp. indica (Rice).